Reading from the N-terminus, the 167-residue chain is Small ribosomal subunit protein uS5 (167 aa).

In terms of domain architecture, S5 DRBM spans 12–75 (LEERVVTINR…EDAKKNMVFV (64 aa)).

It belongs to the universal ribosomal protein uS5 family. In terms of assembly, part of the 30S ribosomal subunit. Contacts proteins S4 and S8.

In terms of biological role, with S4 and S12 plays an important role in translational accuracy. Functionally, located at the back of the 30S subunit body where it stabilizes the conformation of the head with respect to the body. This Listeria innocua serovar 6a (strain ATCC BAA-680 / CLIP 11262) protein is Small ribosomal subunit protein uS5.